The chain runs to 242 residues: N-acetylmuramate alpha-1-phosphate uridylyltransferase (242 aa).

UTP contacts are provided by residues 16–18 and Lys28; that span reads GTR. Residue Asn113 coordinates substrate. Residue Asp115 participates in Mg(2+) binding. Residue Asp158 coordinates substrate.

The protein belongs to the nucleotidyltransferase MurU family. In terms of assembly, monomer. Mg(2+) serves as cofactor.

It catalyses the reaction N-acetyl-alpha-D-muramate 1-phosphate + UDP + H(+) = UDP-N-acetyl-alpha-D-muramate + phosphate. The protein operates within cell wall biogenesis; peptidoglycan recycling. Catalyzes the formation of UDP-N-acetylmuramate (UDP-MurNAc), a crucial precursor of the bacterial peptidoglycan cell wall, from UTP and MurNAc-alpha-1P. Is likely involved in peptidoglycan recycling as part of a cell wall recycling pathway that bypasses de novo biosynthesis of the peptidoglycan precursor UDP-MurNAc. Is able to complement the fosfomycin sensitivity phenotype of a P.putida mutant lacking murU. The sequence is that of N-acetylmuramate alpha-1-phosphate uridylyltransferase from Caulobacter vibrioides (strain ATCC 19089 / CIP 103742 / CB 15) (Caulobacter crescentus).